We begin with the raw amino-acid sequence, 477 residues long: Bifunctional protein HldE (477 aa).

Positions Met-1–Thr-321 are ribokinase. Asn-198–Glu-201 contacts ATP. Residue Asp-266 is part of the active site. The cytidylyltransferase stretch occupies residues Phe-348–Val-477.

In the N-terminal section; belongs to the carbohydrate kinase PfkB family. It in the C-terminal section; belongs to the cytidylyltransferase family. Homodimer.

It carries out the reaction D-glycero-beta-D-manno-heptose 7-phosphate + ATP = D-glycero-beta-D-manno-heptose 1,7-bisphosphate + ADP + H(+). It catalyses the reaction D-glycero-beta-D-manno-heptose 1-phosphate + ATP + H(+) = ADP-D-glycero-beta-D-manno-heptose + diphosphate. It participates in nucleotide-sugar biosynthesis; ADP-L-glycero-beta-D-manno-heptose biosynthesis; ADP-L-glycero-beta-D-manno-heptose from D-glycero-beta-D-manno-heptose 7-phosphate: step 1/4. The protein operates within nucleotide-sugar biosynthesis; ADP-L-glycero-beta-D-manno-heptose biosynthesis; ADP-L-glycero-beta-D-manno-heptose from D-glycero-beta-D-manno-heptose 7-phosphate: step 3/4. Functionally, catalyzes the phosphorylation of D-glycero-D-manno-heptose 7-phosphate at the C-1 position to selectively form D-glycero-beta-D-manno-heptose-1,7-bisphosphate. In terms of biological role, catalyzes the ADP transfer from ATP to D-glycero-beta-D-manno-heptose 1-phosphate, yielding ADP-D-glycero-beta-D-manno-heptose. This is Bifunctional protein HldE from Sulfurimonas denitrificans (strain ATCC 33889 / DSM 1251) (Thiomicrospira denitrificans (strain ATCC 33889 / DSM 1251)).